The sequence spans 381 residues: uncharacterized protein (381 aa).

The next 2 helical transmembrane spans lie at 22–42 (GVLL…YLTA) and 246–266 (LIPE…LLVA).

The protein localises to the cell membrane. This is an uncharacterized protein from Mycobacterium tuberculosis (strain ATCC 25618 / H37Rv).